The following is a 341-amino-acid chain: 4-hydroxy-2-oxovalerate aldolase 3 (341 aa).

Residues 5–257 (ITLHDMTLRD…ETGVDVYRIA (253 aa)) enclose the Pyruvate carboxyltransferase domain. 13–14 (RD) is a substrate binding site. Asp14 provides a ligand contact to Mn(2+). His17 functions as the Proton acceptor in the catalytic mechanism. Residues Ser167 and His196 each contribute to the substrate site. 2 residues coordinate Mn(2+): His196 and His198. Tyr287 provides a ligand contact to substrate.

It belongs to the 4-hydroxy-2-oxovalerate aldolase family.

The catalysed reaction is (S)-4-hydroxy-2-oxopentanoate = acetaldehyde + pyruvate. The chain is 4-hydroxy-2-oxovalerate aldolase 3 (bpHI) from Cupriavidus necator (strain ATCC 17699 / DSM 428 / KCTC 22496 / NCIMB 10442 / H16 / Stanier 337) (Ralstonia eutropha).